Reading from the N-terminus, the 71-residue chain is Long neurotoxin 3 (71 aa).

5 disulfides stabilise this stretch: cysteine 3/cysteine 20, cysteine 14/cysteine 41, cysteine 26/cysteine 30, cysteine 45/cysteine 56, and cysteine 57/cysteine 62.

This sequence belongs to the three-finger toxin family. Long-chain subfamily. Type II alpha-neurotoxin sub-subfamily. As to expression, expressed by the venom gland.

The protein resides in the secreted. Its function is as follows. Binds with high affinity to muscular (alpha-1/CHRNA1) and neuronal (alpha-7/CHRNA7) nicotinic acetylcholine receptor (nAChR) and inhibits acetylcholine from binding to the receptor, thereby impairing neuromuscular and neuronal transmission. In Naja naja (Indian cobra), this protein is Long neurotoxin 3.